The chain runs to 343 residues: Glyceraldehyde-3-phosphate dehydrogenase (343 aa).

NAD(+) contacts are provided by residues 13 to 14 (TI) and Gly-112. 141–143 (SCN) is a D-glyceraldehyde 3-phosphate binding site. The active-site Nucleophile is the Cys-142. An NAD(+)-binding site is contributed by Arg-170. D-glyceraldehyde 3-phosphate is bound at residue 196 to 197 (HA). Gln-303 is a binding site for NAD(+).

The protein belongs to the glyceraldehyde-3-phosphate dehydrogenase family. Homotetramer.

The protein resides in the cytoplasm. The enzyme catalyses D-glyceraldehyde 3-phosphate + phosphate + NADP(+) = (2R)-3-phospho-glyceroyl phosphate + NADPH + H(+). It catalyses the reaction D-glyceraldehyde 3-phosphate + phosphate + NAD(+) = (2R)-3-phospho-glyceroyl phosphate + NADH + H(+). Its pathway is carbohydrate degradation; glycolysis; pyruvate from D-glyceraldehyde 3-phosphate: step 1/5. The sequence is that of Glyceraldehyde-3-phosphate dehydrogenase (gap) from Aeropyrum pernix (strain ATCC 700893 / DSM 11879 / JCM 9820 / NBRC 100138 / K1).